A 644-amino-acid chain; its full sequence is Macrolide export ATP-binding/permease protein MacB (644 aa).

Topologically, residues 1 to 268 (MNIIEIKQLN…SAIVAHKMRS (268 aa)) are cytoplasmic. The ABC transporter domain occupies 4–242 (IEIKQLNRYF…VKNPSVFKGR (239 aa)). An ATP-binding site is contributed by 40 to 47 (GQSGSGKS). A helical transmembrane segment spans residues 269 to 289 (LLTMLGIIIGITSVVSVVALG). The Periplasmic portion of the chain corresponds to 290-523 (NGSQQKILEN…TGTMKLLISS (234 aa)). The chain crosses the membrane as a helical span at residues 524–544 (IAFISLIVGGIGVMNIMLVSV). The Cytoplasmic portion of the chain corresponds to 545-573 (TERTKEIGVRMAIGARQINILQQFLIEAV). The helical transmembrane segment at 574–594 (LICLIGGVAGILLSVLIGVLF) threads the bilayer. Topologically, residues 595–607 (NSFITDFSMDFST) are periplasmic. A helical membrane pass occupies residues 608–628 (ASIVTAVLFSTLIGVLFGYMP). The Cytoplasmic segment spans residues 629 to 644 (AKKAAELNPITALAQE).

Belongs to the ABC transporter superfamily. Macrolide exporter (TC 3.A.1.122) family. In terms of assembly, homodimer. Part of the tripartite efflux system MacAB-TdeA, which is composed of an inner membrane transporter, MacB, a periplasmic membrane fusion protein, MacA, and an outer membrane component, TdeA. The complex forms a large protein conduit and can translocate molecules across both the inner and outer membranes. Interacts with MacA.

It localises to the cell inner membrane. Functionally, part of the tripartite efflux system MacAB-TdeA. MacB is a non-canonical ABC transporter that contains transmembrane domains (TMD), which form a pore in the inner membrane, and an ATP-binding domain (NBD), which is responsible for energy generation. Confers resistance against macrolides. This Aggregatibacter actinomycetemcomitans (Actinobacillus actinomycetemcomitans) protein is Macrolide export ATP-binding/permease protein MacB.